Here is a 583-residue protein sequence, read N- to C-terminus: Proteasome-associated ATPase (583 aa).

The stretch at 2-90 forms a coiled coil; sequence ASREDRDAAN…REEVDRLAQP (89 aa). 271–276 serves as a coordination point for ATP; the sequence is GCGKTL. The docks into pockets in the proteasome alpha-ring stretch occupies residues 582-583; that stretch reads YL.

The protein belongs to the AAA ATPase family. In terms of assembly, homohexamer. Assembles into a hexameric ring structure that caps the 20S proteasome core. Strongly interacts with the prokaryotic ubiquitin-like protein Pup through a hydrophobic interface; the interacting region of ARC lies in its N-terminal coiled-coil domain. There is one Pup binding site per ARC hexamer ring. Upon ATP-binding, the C-terminus of ARC interacts with the alpha-rings of the proteasome core, possibly by binding to the intersubunit pockets.

Its pathway is protein degradation; proteasomal Pup-dependent pathway. Functionally, ATPase which is responsible for recognizing, binding, unfolding and translocation of pupylated proteins into the bacterial 20S proteasome core particle. May be essential for opening the gate of the 20S proteasome via an interaction with its C-terminus, thereby allowing substrate entry and access to the site of proteolysis. Thus, the C-termini of the proteasomal ATPase may function like a 'key in a lock' to induce gate opening and therefore regulate proteolysis. This Acidothermus cellulolyticus (strain ATCC 43068 / DSM 8971 / 11B) protein is Proteasome-associated ATPase.